The following is a 354-amino-acid chain: Methylthioribose-1-phosphate isomerase (354 aa).

Substrate contacts are provided by residues 48–50 (RGA), arginine 95, and glutamine 202. Aspartate 243 (proton donor) is an active-site residue. A substrate-binding site is contributed by 253-254 (NK).

Belongs to the eIF-2B alpha/beta/delta subunits family. MtnA subfamily.

It carries out the reaction 5-(methylsulfanyl)-alpha-D-ribose 1-phosphate = 5-(methylsulfanyl)-D-ribulose 1-phosphate. It participates in amino-acid biosynthesis; L-methionine biosynthesis via salvage pathway; L-methionine from S-methyl-5-thio-alpha-D-ribose 1-phosphate: step 1/6. Catalyzes the interconversion of methylthioribose-1-phosphate (MTR-1-P) into methylthioribulose-1-phosphate (MTRu-1-P). The chain is Methylthioribose-1-phosphate isomerase from Roseiflexus castenholzii (strain DSM 13941 / HLO8).